The primary structure comprises 674 residues: Pentatricopeptide repeat-containing protein At4g17616 (674 aa).

PPR repeat units lie at residues 409 to 443 (GSRLCADVIDACVAIGWLEAAHDILDDMNSAGYPM), 444 to 478 (ELATYRMVLSGYYKSKMLRNAEVLLKQMTKAGLIT), 519 to 553 (MLYELNSSLYYFCKAKMQGDALITYRKIPKMKIPP), 554 to 584 (TVQSFWILIDMYSSLGMYREITIVWGDIKRN), and 593 to 627 (TQDLLEKLVVNFLRGGYFERVMELISYMKENDMYN).

This sequence belongs to the PPR family. P subfamily.

The chain is Pentatricopeptide repeat-containing protein At4g17616 from Arabidopsis thaliana (Mouse-ear cress).